Consider the following 314-residue polypeptide: ATP synthase gamma chain (314 aa).

It belongs to the ATPase gamma chain family. F-type ATPases have 2 components, CF(1) - the catalytic core - and CF(0) - the membrane proton channel. CF(1) has five subunits: alpha(3), beta(3), gamma(1), delta(1), epsilon(1). CF(0) has three main subunits: a, b and c.

The protein localises to the cellular thylakoid membrane. Its function is as follows. Produces ATP from ADP in the presence of a proton gradient across the membrane. The gamma chain is believed to be important in regulating ATPase activity and the flow of protons through the CF(0) complex. The protein is ATP synthase gamma chain of Gloeothece citriformis (strain PCC 7424) (Cyanothece sp. (strain PCC 7424)).